Reading from the N-terminus, the 286-residue chain is NH(3)-dependent NAD(+) synthetase (286 aa).

Glycine 43 to serine 50 lines the ATP pocket. Aspartate 49 is a binding site for Mg(2+). Position 131 (arginine 131) interacts with deamido-NAD(+). ATP is bound at residue threonine 151. Position 156 (glutamate 156) interacts with Mg(2+). Positions 164 and 171 each coordinate deamido-NAD(+). Residues lysine 180 and serine 202 each contribute to the ATP site. The interval histidine 257–lysine 286 is disordered. Histidine 262–lysine 263 serves as a coordination point for deamido-NAD(+). A compositionally biased stretch (basic residues) spans lysine 277–lysine 286.

The protein belongs to the NAD synthetase family. As to quaternary structure, homodimer.

It catalyses the reaction deamido-NAD(+) + NH4(+) + ATP = AMP + diphosphate + NAD(+) + H(+). It participates in cofactor biosynthesis; NAD(+) biosynthesis; NAD(+) from deamido-NAD(+) (ammonia route): step 1/1. Functionally, catalyzes the ATP-dependent amidation of deamido-NAD to form NAD. Uses ammonia as a nitrogen source. This is NH(3)-dependent NAD(+) synthetase from Aeropyrum pernix (strain ATCC 700893 / DSM 11879 / JCM 9820 / NBRC 100138 / K1).